A 181-amino-acid polypeptide reads, in one-letter code: Ribonuclease M5 (181 aa).

The Toprim domain occupies 5–88 (KEIIVVEGKD…IKHAYLNTKD (84 aa)). Mg(2+) is bound by residues Glu-11, Asp-57, and Asp-59.

Belongs to the ribonuclease M5 family. It depends on Mg(2+) as a cofactor.

Its subcellular location is the cytoplasm. It carries out the reaction Endonucleolytic cleavage of RNA, removing 21 and 42 nucleotides, respectively, from the 5'- and 3'-termini of a 5S-rRNA precursor.. Required for correct processing of both the 5' and 3' ends of 5S rRNA precursor. Cleaves both sides of a double-stranded region yielding mature 5S rRNA in one step. In Borreliella burgdorferi (strain ATCC 35210 / DSM 4680 / CIP 102532 / B31) (Borrelia burgdorferi), this protein is Ribonuclease M5.